Consider the following 263-residue polypeptide: Tryptophan synthase alpha chain (263 aa).

Residues E49 and D60 each act as proton acceptor in the active site.

Belongs to the TrpA family. Tetramer of two alpha and two beta chains.

The enzyme catalyses (1S,2R)-1-C-(indol-3-yl)glycerol 3-phosphate + L-serine = D-glyceraldehyde 3-phosphate + L-tryptophan + H2O. It participates in amino-acid biosynthesis; L-tryptophan biosynthesis; L-tryptophan from chorismate: step 5/5. In terms of biological role, the alpha subunit is responsible for the aldol cleavage of indoleglycerol phosphate to indole and glyceraldehyde 3-phosphate. This Cereibacter sphaeroides (strain ATCC 17029 / ATH 2.4.9) (Rhodobacter sphaeroides) protein is Tryptophan synthase alpha chain.